We begin with the raw amino-acid sequence, 569 residues long: Urease subunit alpha (569 aa).

A Urease domain is found at 131–569 (GGMDAHIHFI…LPMAQRYFLF (439 aa)). Ni(2+)-binding residues include His-136, His-138, and Lys-218. Lys-218 is subject to N6-carboxylysine. His-220 is a binding site for substrate. Residues His-247 and His-273 each coordinate Ni(2+). The Proton donor role is filled by His-321. Asp-361 is a Ni(2+) binding site.

The protein belongs to the metallo-dependent hydrolases superfamily. Urease alpha subunit family. Heterotrimer of UreA (gamma), UreB (beta) and UreC (alpha) subunits. Three heterotrimers associate to form the active enzyme. It depends on Ni cation as a cofactor. Post-translationally, carboxylation allows a single lysine to coordinate two nickel ions.

The protein resides in the cytoplasm. It carries out the reaction urea + 2 H2O + H(+) = hydrogencarbonate + 2 NH4(+). Its pathway is nitrogen metabolism; urea degradation; CO(2) and NH(3) from urea (urease route): step 1/1. This chain is Urease subunit alpha, found in Rhizobium rhizogenes (strain K84 / ATCC BAA-868) (Agrobacterium radiobacter).